A 224-amino-acid chain; its full sequence is Pyridoxine/pyridoxamine 5'-phosphate oxidase (224 aa).

Residues R19 to Y22 and K81 each bind substrate. FMN is bound by residues R76–K81, F91–T92, K98, and Q120. Substrate-binding residues include Y138 and R142. FMN is bound by residues Q155–S156 and W201. Residue R207–H209 coordinates substrate. FMN is bound at residue R211.

Belongs to the pyridoxamine 5'-phosphate oxidase family. Homodimer. The cofactor is FMN.

It carries out the reaction pyridoxamine 5'-phosphate + O2 + H2O = pyridoxal 5'-phosphate + H2O2 + NH4(+). It catalyses the reaction pyridoxine 5'-phosphate + O2 = pyridoxal 5'-phosphate + H2O2. It functions in the pathway cofactor metabolism; pyridoxal 5'-phosphate salvage; pyridoxal 5'-phosphate from pyridoxamine 5'-phosphate: step 1/1. The protein operates within cofactor metabolism; pyridoxal 5'-phosphate salvage; pyridoxal 5'-phosphate from pyridoxine 5'-phosphate: step 1/1. Its function is as follows. Catalyzes the oxidation of either pyridoxine 5'-phosphate (PNP) or pyridoxamine 5'-phosphate (PMP) into pyridoxal 5'-phosphate (PLP). The protein is Pyridoxine/pyridoxamine 5'-phosphate oxidase of Mycobacterium bovis (strain ATCC BAA-935 / AF2122/97).